We begin with the raw amino-acid sequence, 445 residues long: MKVKMLSRNPDNYVRETKLDLQRVPRNYDPALHPFEVPREYIRALNATKLERVFAKPFLASLDGHRDGVNCLAKHPEKLATVLSGACDGEVRIWNLTQRNCIRTIQAHEGFVRGICTRFCGTSFFTVGDDKTVKQWKMDGPGYGDEEEPLHTILGKTVYTGIDHHWKEAVFATCGQQVDIWDEQRTNPICSMTWGFDSISSVKFNPIETFLLGSCASDRNIVLYDMRQATPLKKVILDMRTNTICWNPMEAFIFTAANEDYNLYTFDMRALDTPVMVHMDHVSAVLDVDYSPTGKEFVSASFDKSIRIFPVDKSRSREVYHTKRMQHVICVKWTSDSKYIMCGSDEMNIRLWKANASEKLGVLTSREKAAKDYNQKLKEKFQHYPHIKRIARHRHLPKSIYSQIQEQRIMKEARRRKEVNRIKHSKPGSVPLVSEKKKHVVAVVK.

An N6-acetyllysine modification is found at lysine 49. WD repeat units lie at residues 64 to 104 (GHRD…CIRT), 107 to 146 (AHEGFVRGICTRFCGTSFFTVGDDKTVKQWKMDGPGYGDE), 149 to 191 (PLHT…PICS), 194 to 234 (WGFD…PLKK), 236 to 276 (ILDM…TPVM), 280 to 319 (DHVSAVLDVDYSPTGKEFVSASFDKSIRIFPVDKSRSREV), and 323 to 362 (KRMQHVICVKWTSDSKYIMCGSDEMNIRLWKANASEKLGV). The required for nucleolar location stretch occupies residues 353–441 (KANASEKLGV…LVSEKKKHVV (89 aa)).

Belongs to the WD repeat DCAF13/WDSOF1 family. In terms of assembly, part of the small subunit (SSU) processome, composed of more than 70 proteins and the RNA chaperone small nucleolar RNA (snoRNA) U3. Component of the DCX(DCAF13) E3 ubiquitin ligase complex, at least composed of CUL4 (CUL4A or CUL4B), DDB1, DCAF13 and RBX1. Interacts (via WD40 domain) with DDB1. Interacts with ESR1 and LATS1. In terms of tissue distribution, expressed in the endometrium during decidualization. Expression is down-regulated in preeclampsia decidual tissues.

It is found in the nucleus. The protein localises to the nucleolus. It functions in the pathway protein modification; protein ubiquitination. Its function is as follows. Part of the small subunit (SSU) processome, first precursor of the small eukaryotic ribosomal subunit. During the assembly of the SSU processome in the nucleolus, many ribosome biogenesis factors, an RNA chaperone and ribosomal proteins associate with the nascent pre-rRNA and work in concert to generate RNA folding, modifications, rearrangements and cleavage as well as targeted degradation of pre-ribosomal RNA by the RNA exosome. Participates in the 18S rRNA processing in growing oocytes, being essential for oocyte nonsurrounded nucleolus (NSN) to surrounded nucleolus (SN) transition. In terms of biological role, substrate-recognition component of a DCX (DDB1-CUL4-X-box) E3 ubiquitin-protein ligase complex that plays a key role in embryo preimplantation and is required for normal meiotic cycle progression in oocytes. Acts as a maternal factor that regulates oocyte and zygotic chromatin tightness during maternal to zygotic transition. Also involved in the transformation of the endometrium into the decidua, known as decidualization, providing a solid foundation for implantation of blastocysts. Recognizes the histone methyltransferases SUV39H1 and SUV39H2 and directs them to polyubiquitination and proteasomal degradation, which facilitates the H3K9me3 removal and early zygotic gene expression, essential steps for progressive genome reprogramming and the establishment of pluripotency during preimplantation embryonic development. Supports the spindle assembly and chromosome condensation during oocyte meiotic division by targeting the polyubiquitination and degradation of PTEN, a lipid phosphatase that inhibits PI3K pathway as well as oocyte growth and maturation. Targets PMP22 for polyubiquitination and proteasomal degradation. The sequence is that of DDB1- and CUL4-associated factor 13 from Homo sapiens (Human).